A 49-amino-acid polypeptide reads, in one-letter code: Osteocalcin (49 aa).

Residues tyrosine 1–glycine 47 form the Gla domain. Positions 17, 21, 24, and 30 each coordinate Ca(2+). 3 positions are modified to 4-carboxyglutamate: glutamate 17, glutamate 21, and glutamate 24. The cysteines at positions 23 and 29 are disulfide-linked.

This sequence belongs to the osteocalcin/matrix Gla protein family. In terms of processing, gamma-carboxyglutamate residues are formed by vitamin K dependent carboxylation by GGCX. These residues are essential for the binding of calcium. Decarboxylation promotes the hormone activity.

It is found in the secreted. In terms of biological role, the carboxylated form is one of the main organic components of the bone matrix, which constitutes 1-2% of the total bone protein. It acts as a negative regulator of bone formation and is required to limit bone formation without impairing bone resorption or mineralization. The carboxylated form binds strongly to apatite and calcium. Functionally, the uncarboxylated form acts as a hormone secreted by osteoblasts, which regulates different cellular processes, such as energy metabolism, male fertility and brain development. Regulates of energy metabolism by acting as a hormone favoring pancreatic beta-cell proliferation, insulin secretion and sensitivity and energy expenditure. Uncarboxylated osteocalcin hormone also promotes testosterone production in the testes: acts as a ligand for G protein-coupled receptor GPRC6A at the surface of Leydig cells, initiating a signaling response that promotes the expression of enzymes required for testosterone synthesis in a CREB-dependent manner. Also acts as a regulator of brain development: osteocalcin hormone crosses the blood-brain barrier and acts as a ligand for GPR158 on neurons, initiating a signaling response that prevents neuronal apoptosis in the hippocampus, favors the synthesis of all monoamine neurotransmitters and inhibits that of gamma-aminobutyric acid (GABA). Osteocalcin also crosses the placenta during pregnancy and maternal osteocalcin is required for fetal brain development. This Canis lupus familiaris (Dog) protein is Osteocalcin (BGLAP).